The primary structure comprises 446 residues: Histidine--tRNA ligase (446 aa).

It belongs to the class-II aminoacyl-tRNA synthetase family. As to quaternary structure, homodimer.

It is found in the cytoplasm. It carries out the reaction tRNA(His) + L-histidine + ATP = L-histidyl-tRNA(His) + AMP + diphosphate + H(+). The chain is Histidine--tRNA ligase from Burkholderia vietnamiensis (strain G4 / LMG 22486) (Burkholderia cepacia (strain R1808)).